The sequence spans 321 residues: Phospho-N-acetylmuramoyl-pentapeptide-transferase (321 aa).

The next 10 membrane-spanning stretches (helical) occupy residues I6–G26, M54–F74, F77–L97, L117–S137, F143–V163, I175–W195, F200–N220, I226–I246, W251–V271, and I301–F321.

The protein belongs to the glycosyltransferase 4 family. MraY subfamily. It depends on Mg(2+) as a cofactor.

The protein localises to the cell membrane. The catalysed reaction is UDP-N-acetyl-alpha-D-muramoyl-L-alanyl-gamma-D-glutamyl-L-lysyl-D-alanyl-D-alanine + di-trans,octa-cis-undecaprenyl phosphate = Mur2Ac(oyl-L-Ala-gamma-D-Glu-L-Lys-D-Ala-D-Ala)-di-trans,octa-cis-undecaprenyl diphosphate + UMP. The protein operates within cell wall biogenesis; peptidoglycan biosynthesis. Functionally, catalyzes the initial step of the lipid cycle reactions in the biosynthesis of the cell wall peptidoglycan: transfers peptidoglycan precursor phospho-MurNAc-pentapeptide from UDP-MurNAc-pentapeptide onto the lipid carrier undecaprenyl phosphate, yielding undecaprenyl-pyrophosphoryl-MurNAc-pentapeptide, known as lipid I. The protein is Phospho-N-acetylmuramoyl-pentapeptide-transferase of Enterococcus faecalis (strain ATCC 700802 / V583).